Consider the following 298-residue polypeptide: PYK10-binding protein 1 (298 aa).

The residue at position 2 (alanine 2) is an N-acetylalanine. Jacalin-type lectin domains are found at residues 2-142 (AQKV…YFAP) and 152-295 (AKQL…HVRP). Serine 20 is subject to Phosphoserine.

It belongs to the jacalin lectin family. Component of the PYK10 complex, at least composed of PYK10/BGLU23, BGLU21, BGLU22, JAL22, JAL23, PBP1/JAL30, PBP2/JAL31, JAL32, JAL33, JAL34, JAL35, GLL22 and GLL23. Expressed exclusively in roots.

It is found in the cytoplasm. Functionally, inhibitor-type lectin that may regulate the correct polymerization of BGLU23/PYK10 upon tissue damage. Activates BGLU21, BGLU22 and BGLU23. The chain is PYK10-binding protein 1 (PBP1) from Arabidopsis thaliana (Mouse-ear cress).